Reading from the N-terminus, the 161-residue chain is Xanthine-guanine phosphoribosyltransferase (161 aa).

Residues 41 to 42 and 95 to 103 each bind 5-phospho-alpha-D-ribose 1-diphosphate; these read RG and DDLVDTGNT. Mg(2+) is bound at residue Asp96. Guanine is bound by residues Asp99 and Ile142. 2 residues coordinate xanthine: Asp99 and Ile142. GMP is bound by residues 99–103 and 141–142; these read DTGNT and WI.

This sequence belongs to the purine/pyrimidine phosphoribosyltransferase family. XGPT subfamily. In terms of assembly, homotetramer. The cofactor is Mg(2+).

It is found in the cell inner membrane. The catalysed reaction is GMP + diphosphate = guanine + 5-phospho-alpha-D-ribose 1-diphosphate. It catalyses the reaction XMP + diphosphate = xanthine + 5-phospho-alpha-D-ribose 1-diphosphate. The enzyme catalyses IMP + diphosphate = hypoxanthine + 5-phospho-alpha-D-ribose 1-diphosphate. Its pathway is purine metabolism; GMP biosynthesis via salvage pathway; GMP from guanine: step 1/1. It participates in purine metabolism; XMP biosynthesis via salvage pathway; XMP from xanthine: step 1/1. Its function is as follows. Purine salvage pathway enzyme that catalyzes the transfer of the ribosyl-5-phosphate group from 5-phospho-alpha-D-ribose 1-diphosphate (PRPP) to the N9 position of the 6-oxopurines guanine and xanthine to form the corresponding ribonucleotides GMP (guanosine 5'-monophosphate) and XMP (xanthosine 5'-monophosphate), with the release of PPi. To a lesser extent, also acts on hypoxanthine. This Idiomarina loihiensis (strain ATCC BAA-735 / DSM 15497 / L2-TR) protein is Xanthine-guanine phosphoribosyltransferase.